The sequence spans 693 residues: UvrABC system protein B (693 aa).

Positions 35-188 constitute a Helicase ATP-binding domain; it reads ERIKNGEKDV…DDLLRKFVSM (154 aa). An ATP-binding site is contributed by 48-55; sequence GATGTGKS. A Beta-hairpin motif is present at residues 101 to 124; sequence YYDYYQPEAYVAQTDTFIEKDSSV. The Helicase C-terminal domain occupies 438 to 604; it reads QIDDLLGEIK…PLRKKIADIT (167 aa). Residues 648-683 form the UVR domain; sequence VGLIEQLTEQMHAAAGELQFELAARLRDEVGELKKE.

It belongs to the UvrB family. Forms a heterotetramer with UvrA during the search for lesions. Interacts with UvrC in an incision complex.

It localises to the cytoplasm. In terms of biological role, the UvrABC repair system catalyzes the recognition and processing of DNA lesions. A damage recognition complex composed of 2 UvrA and 2 UvrB subunits scans DNA for abnormalities. Upon binding of the UvrA(2)B(2) complex to a putative damaged site, the DNA wraps around one UvrB monomer. DNA wrap is dependent on ATP binding by UvrB and probably causes local melting of the DNA helix, facilitating insertion of UvrB beta-hairpin between the DNA strands. Then UvrB probes one DNA strand for the presence of a lesion. If a lesion is found the UvrA subunits dissociate and the UvrB-DNA preincision complex is formed. This complex is subsequently bound by UvrC and the second UvrB is released. If no lesion is found, the DNA wraps around the other UvrB subunit that will check the other stand for damage. The chain is UvrABC system protein B from Arthrobacter sp. (strain FB24).